The primary structure comprises 1326 residues: Probable serine/threonine-protein kinase gdt8 (1326 aa).

The N-terminal stretch at 1-22 (MINKILIKLITIIIFCFSFLFA) is a signal peptide. At 23–782 (EEDLIRTPPG…VDRNENLELK (760 aa)) the chain is on the extracellular side. Disordered regions lie at residues 419–467 (VDQN…GNQG) and 731–762 (EPPT…QTPI). Low complexity-rich tracts occupy residues 422–460 (NNNN…NNNN) and 731–761 (EPPT…TQTP). The helical transmembrane segment at 783-803 (IALPICLSLALLIGIIIMICI) threads the bilayer. The Cytoplasmic portion of the chain corresponds to 804-1326 (FKKVQSNSKL…TKEDKDLDEN (523 aa)). Positions 833–858 (IVSQPPTVIEEKPQDNSKPDDQKLIE) are disordered. The segment covering 841–858 (IEEKPQDNSKPDDQKLIE) has biased composition (basic and acidic residues). The Protein kinase domain occupies 1036–1292 (IKTEQLIASY…FSEISLHLEI (257 aa)). Residues 1042–1050 (IASYLPSKV) and Lys-1065 contribute to the ATP site. Residue Asp-1158 is the Proton acceptor of the active site. Positions 1301–1326 (MNESEESTSNHNTNSKTKEDKDLDEN) are disordered. Residues 1316-1326 (KTKEDKDLDEN) are compositionally biased toward basic and acidic residues.

In the N-terminal section; belongs to the GDT family. It in the C-terminal section; belongs to the protein kinase superfamily. TKL Ser/Thr protein kinase family.

It is found in the membrane. It carries out the reaction L-seryl-[protein] + ATP = O-phospho-L-seryl-[protein] + ADP + H(+). It catalyses the reaction L-threonyl-[protein] + ATP = O-phospho-L-threonyl-[protein] + ADP + H(+). The polypeptide is Probable serine/threonine-protein kinase gdt8 (gdt8) (Dictyostelium discoideum (Social amoeba)).